A 242-amino-acid chain; its full sequence is Transcriptional activator protein RaiR (242 aa).

Positions 177–242 (KVADLPRLSR…EQLLGPRRSN (66 aa)) constitute an HTH luxR-type domain. The H-T-H motif DNA-binding region spans 201–220 (AKQICARLSISVSAVQLYLA).

It belongs to the autoinducer-regulated transcriptional regulatory protein family.

The polypeptide is Transcriptional activator protein RaiR (raiR) (Rhizobium etli).